Here is a 177-residue protein sequence, read N- to C-terminus: Large ribosomal subunit protein uL6 (177 aa).

Belongs to the universal ribosomal protein uL6 family. Part of the 50S ribosomal subunit.

This protein binds to the 23S rRNA, and is important in its secondary structure. It is located near the subunit interface in the base of the L7/L12 stalk, and near the tRNA binding site of the peptidyltransferase center. The polypeptide is Large ribosomal subunit protein uL6 (Proteus mirabilis (strain HI4320)).